The sequence spans 162 residues: Sec-independent protein translocase protein TatB (162 aa).

A helical transmembrane segment spans residues 1 to 21; sequence MFDIGFSELILIFVVGLVVLG. Residues 136–162 are disordered; that stretch reads LTAYYPPDDDLVSPSTTKLEQDKQNVN.

It belongs to the TatB family. In terms of assembly, the Tat system comprises two distinct complexes: a TatABC complex, containing multiple copies of TatA, TatB and TatC subunits, and a separate TatA complex, containing only TatA subunits. Substrates initially bind to the TatABC complex, which probably triggers association of the separate TatA complex to form the active translocon.

Its subcellular location is the cell inner membrane. Part of the twin-arginine translocation (Tat) system that transports large folded proteins containing a characteristic twin-arginine motif in their signal peptide across membranes. Together with TatC, TatB is part of a receptor directly interacting with Tat signal peptides. TatB may form an oligomeric binding site that transiently accommodates folded Tat precursor proteins before their translocation. The polypeptide is Sec-independent protein translocase protein TatB (Haemophilus ducreyi (strain 35000HP / ATCC 700724)).